The chain runs to 404 residues: Argininosuccinate synthase (404 aa).

Residues 10 to 18 (AYSGGLDTS) and A37 contribute to the ATP site. L-citrulline is bound by residues Y89 and S94. ATP is bound at residue G119. L-aspartate is bound by residues T121, N125, and D126. N125 contributes to the L-citrulline binding site. L-citrulline-binding residues include R129, S178, S187, E263, and Y275.

It belongs to the argininosuccinate synthase family. Type 1 subfamily. In terms of assembly, homotetramer.

The protein localises to the cytoplasm. It catalyses the reaction L-citrulline + L-aspartate + ATP = 2-(N(omega)-L-arginino)succinate + AMP + diphosphate + H(+). It functions in the pathway amino-acid biosynthesis; L-arginine biosynthesis; L-arginine from L-ornithine and carbamoyl phosphate: step 2/3. This chain is Argininosuccinate synthase, found in Photobacterium profundum (strain SS9).